Consider the following 290-residue polypeptide: MSFVAYEELIKEGDTAILSLGHGSMVAVRVQRGAQTQTRHGVLRHSVDLIGRPFGSKVICSRGGWVYVLHPTPELWTVNLPHRTQILYSTDIALITMMLELRPGSVVCESGTGSGSVSHAIIRSVAPTGHLHTVEFHQQRADKAREEFQEHRLSQWVTVHTQDVCCSGFGVVHVADAVFLDIPSPWEAVGHAWDALKVEGGRFCSFSPCIEQVQRTCQALAAHGFTELSTLEVLPQVYNVRTVSLPLPDLGANNLETNMGSDASPFRSGTPMKETVGHTGYLTFATKTPG.

The residue at position 2 (S2) is an N-acetylserine. Substrate regions lie at residues 20–22 (LGH), 35–42 (QTQTRHGV), 64–65 (GW), 85–89 (QILYS), and 110–117 (SGTGSGSV). S-adenosyl-L-methionine contacts are provided by residues L87, 114–116 (SGS), E135, R140, 163–164 (DV), and D181. 2 substrate regions span residues 180–183 (LDIP) and 205–212 (SFSPCIEQ). S264 carries the phosphoserine modification. T279 is a binding site for substrate.

It belongs to the class I-like SAM-binding methyltransferase superfamily. TRM61 family. In terms of assembly, heterotetramer; composed of two copies of TRMT6 and two copies of TRMT61A.

It localises to the nucleus. The catalysed reaction is adenosine(58) in tRNA + S-adenosyl-L-methionine = N(1)-methyladenosine(58) in tRNA + S-adenosyl-L-homocysteine + H(+). It carries out the reaction an adenosine in mRNA + S-adenosyl-L-methionine = an N(1)-methyladenosine in mRNA + S-adenosyl-L-homocysteine + H(+). Its function is as follows. Catalytic subunit of tRNA (adenine-N(1)-)-methyltransferase, which catalyzes the formation of N(1)-methyladenine at position 58 (m1A58) in initiator methionyl-tRNA. Catalytic subunit of mRNA N(1)-methyltransferase complex, which mediates methylation of adenosine residues at the N(1) position of a small subset of mRNAs: N(1) methylation takes place in tRNA T-loop-like structures of mRNAs and is only present at low stoichiometries. This chain is tRNA (adenine(58)-N(1))-methyltransferase catalytic subunit TRMT61A (Trmt61a), found in Mus musculus (Mouse).